Here is an 882-residue protein sequence, read N- to C-terminus: MGYKSDQLLIVVSILEGRHFPKRSRHMLVIDAKFDGEQLSTDPVPHLEQPQFATELAWELDRKTLHQHRLQRTPIKLQCFALDTLTSAKESVGYVVLDLRAAQEKKQAPKWYSLLSSKYTKFKPEIQLNISLETDNKPAVDTFKAKEAPPRRSKVPGDLAGLEPKSLVPILNEAEGYHQIGPAEYCKDYFVLSVTIAFATQLEQLIPSTLRLPEPQPEFFFYYSLLGNDVTNEPFTDLINPEFEPERASVRIRSSKEVLCMYLSVQPKLQIHLCCGDQSLGSTDIALTGLLNKASVEIEHHPVVVEGAFILTPPNRAKQNLSAVPLEMSPTIGVSIALQKEIGLQSVHHPKEQPQSVAAEEVPTTPLKKSANLKEGARSPPPPKPLMFSDSPPTKDEATESEAESIKSDFQAEPPLSKPLTRSKSPPLSEPPLSGSHCPTPIQGVSAIAKNTSESSSAQKITVPPAAHHFCFTIDLRSIRNVDVGFPVNCILRYSYPFFGSAAPIMTNPPVEVQKNMEVFLPQSYCAFDFATLPHQIQDTFLRLPLLVELWHKDKMTKDLLIGVTKIQLSNVLSSEKTRFLGPHGDQCWRQTFSERITVTAVEGSKNKVAELSYIITLEDYGLVKVREVVVSESSQSTGQEKGSLPAQTLQSTAPLPEPRETLEYKAALELEMWKEMQEDLFVNQLKKKELVHMQALAEEWKRRDKEREALVKKKVAEYTVLEEQLQKALADLEKRERQLANDEMELKKLKAQMQLDCERSIQERQDSIRRVREDCMHQIELERSKAKQLEEDKLRLQQQVELERKLESTTKSKLHYKQQWGRALKELARLKQREQENAMARLKKQQQELEHMRLRYLAAEEKDVVKTERQELEEIRNELNR.

The 112-residue stretch at 1–112 folds into the C2 1 domain; sequence MGYKSDQLLI…QEKKQAPKWY (112 aa). The interval 348–443 is disordered; sequence HHPKEQPQSV…SGSHCPTPIQ (96 aa). Over residues 423–436 the composition is skewed to low complexity; that stretch reads SKSPPLSEPPLSGS. One can recognise a C2 2 domain in the interval 453–582; sequence SESSSAQKIT…LSSEKTRFLG (130 aa). Residues 709 to 882 adopt a coiled-coil conformation; the sequence is EALVKKKVAE…LEEIRNELNR (174 aa).

It belongs to the CEP120 family.

It is found in the cytoplasm. The protein resides in the cytoskeleton. The protein localises to the microtubule organizing center. Its subcellular location is the centrosome. In terms of biological role, plays a role in the microtubule-dependent coupling of the nucleus and the centrosome. The protein is Centrosomal protein of 120 kDa (cep120) of Xenopus tropicalis (Western clawed frog).